A 646-amino-acid chain; its full sequence is MPDPATYRPAPGSIPVEPGVYRFRDQHGRVIYVGKAKSLRSRLTSYFADVASLAPRTRQLVTTAAKVEWTVVGTEVEALQLEYTWIKEFDPRFNVRYRDDKSYPVLAVTLGEEFPRLMVYRGPRRKGVRYFGPYSHAWAIRETLDLLTRVFPARTCSAGVFKRHRQIDRPCLLGYIDKCSAPCIGRVDAAQHRQIVADFCDFLSGKTDRFARALEQQMNAAAEQLDFERAARLRDDLSALKRAMEKQAVVLGDGTDADVVAFADDELEAAVQVFHVRGGRVRGQRGWIVEKPGEPGDSGIQLVEQFLTQFYGDQAALDDAADESANPVPREVLVPCLPSNAEELASWLSGLRGSRVVLRVPRRGDKRALAETVHRNAEDALQQHKLKRASDFNARSAALQSIQDSLGLADAPLRIECVDVSHVQGTDVVGSLVVFEDGLPRKSDYRHFGIREAAGQGRSDDVACIAEVTRRRFLRHLRDQSDPDLLSPERKSRRFAYPPNLYVVDGGAPQVNAASAVIDELGVTDVAVIGLAKRLEEVWVPSEPDPIIMPRNSEGLYLLQRVRDEAHRFAITYHRSKRSTRMTASALDSVPGLGEHRRKALVTHFGSIARLKEATVDEITAVPGIGVATATAVHDALRPDSSGAAR.

In terms of domain architecture, GIY-YIG spans 16 to 95 (VEPGVYRFRD…IKEFDPRFNV (80 aa)). A UVR domain is found at 208–243 (DRFARALEQQMNAAAEQLDFERAARLRDDLSALKRA).

Belongs to the UvrC family. In terms of assembly, interacts with UvrB in an incision complex.

The protein resides in the cytoplasm. In terms of biological role, the UvrABC repair system catalyzes the recognition and processing of DNA lesions. UvrC both incises the 5' and 3' sides of the lesion. The N-terminal half is responsible for the 3' incision and the C-terminal half is responsible for the 5' incision. This chain is UvrABC system protein C, found in Mycobacterium bovis (strain BCG / Pasteur 1173P2).